Reading from the N-terminus, the 403-residue chain is Alkaline protease 1 (403 aa).

Residues 1–21 (MHSFKRSLLLLGALLPAVFGA) form the signal peptide. A propeptide spanning residues 22 to 124 (PVEPRRAAEK…QIWYIDALTS (103 aa)) is cleaved from the precursor. The region spanning 35–119 (KYIVTFKSGL…HVEEDQIWYI (85 aa)) is the Inhibitor I9 domain. The region spanning 129–403 (PWGLGAISHK…NLLAYNGADE (275 aa)) is the Peptidase S8 domain. Active-site charge relay system residues include aspartate 161 and histidine 192. Asparagine 252 is a glycosylation site (N-linked (GlcNAc...) asparagine). Serine 348 (charge relay system) is an active-site residue.

The protein belongs to the peptidase S8 family.

It is found in the secreted. The catalysed reaction is Hydrolysis of proteins with broad specificity, and of Bz-Arg-OEt &gt; Ac-Tyr-OEt. Does not hydrolyze peptide amides.. Functionally, secreted alkaline protease that allows assimilation of proteinaceous substrates. The protein is Alkaline protease 1 (alp1) of Emericella nidulans (strain FGSC A4 / ATCC 38163 / CBS 112.46 / NRRL 194 / M139) (Aspergillus nidulans).